Here is a 347-residue protein sequence, read N- to C-terminus: Monopolin complex subunit LRS4 (347 aa).

The stretch at 46–118 (KKVVDETLFL…QISVDKHNKE (73 aa)) forms a coiled coil. The span at 112–130 (VDKHNKERTPSTGRDEQQR) shows a compositional bias: basic and acidic residues. Disordered regions lie at residues 112 to 183 (VDKH…SLLS) and 208 to 230 (RNDTTSSKIAGKSPSRLSALQKS). Composition is skewed to polar residues over residues 131 to 140 (NSKAAHTSKP) and 155 to 172 (NNQTNDRGGNDPDSPTSQ). Phosphoserine is present on residues Ser-168 and Ser-230.

In terms of assembly, component of the monopolin complex composed of at least CSM1, LRS4 and MAM1. The complex associates with the kinetochore. Phosphorylated by CDC5. This phosphorylation is required for the location to the kinetochores during late pachytene.

The protein resides in the nucleus. It localises to the nucleolus. The protein localises to the chromosome. Its subcellular location is the centromere. Component of the monopolin complex which promotes monoorientation during meiosis I, required for chromosome segregation during meiosis. Involved in rDNA silencing. This chain is Monopolin complex subunit LRS4 (LRS4), found in Saccharomyces cerevisiae (strain ATCC 204508 / S288c) (Baker's yeast).